The sequence spans 366 residues: Chorismate synthase (366 aa).

2 residues coordinate NADP(+): Arg48 and Arg54. FMN-binding positions include 125-127, 238-239, Gly278, 293-297, and Arg319; these read RSS, NA, and KPTSS.

This sequence belongs to the chorismate synthase family. As to quaternary structure, homotetramer. Requires FMNH2 as cofactor.

The enzyme catalyses 5-O-(1-carboxyvinyl)-3-phosphoshikimate = chorismate + phosphate. It participates in metabolic intermediate biosynthesis; chorismate biosynthesis; chorismate from D-erythrose 4-phosphate and phosphoenolpyruvate: step 7/7. Its function is as follows. Catalyzes the anti-1,4-elimination of the C-3 phosphate and the C-6 proR hydrogen from 5-enolpyruvylshikimate-3-phosphate (EPSP) to yield chorismate, which is the branch point compound that serves as the starting substrate for the three terminal pathways of aromatic amino acid biosynthesis. This reaction introduces a second double bond into the aromatic ring system. This is Chorismate synthase from Cellvibrio japonicus (strain Ueda107) (Pseudomonas fluorescens subsp. cellulosa).